Here is a 275-residue protein sequence, read N- to C-terminus: 3-methyl-2-oxobutanoate hydroxymethyltransferase (275 aa).

2 residues coordinate Mg(2+): aspartate 49 and aspartate 88. Residues 49–50 (DS), aspartate 88, and lysine 118 each bind 3-methyl-2-oxobutanoate. Glutamate 120 serves as a coordination point for Mg(2+). Glutamate 187 (proton acceptor) is an active-site residue.

This sequence belongs to the PanB family. In terms of assembly, homodecamer; pentamer of dimers. The cofactor is Mg(2+).

The protein resides in the cytoplasm. The catalysed reaction is 3-methyl-2-oxobutanoate + (6R)-5,10-methylene-5,6,7,8-tetrahydrofolate + H2O = 2-dehydropantoate + (6S)-5,6,7,8-tetrahydrofolate. It functions in the pathway cofactor biosynthesis; (R)-pantothenate biosynthesis; (R)-pantoate from 3-methyl-2-oxobutanoate: step 1/2. Catalyzes the reversible reaction in which hydroxymethyl group from 5,10-methylenetetrahydrofolate is transferred onto alpha-ketoisovalerate to form ketopantoate. The polypeptide is 3-methyl-2-oxobutanoate hydroxymethyltransferase (Bartonella henselae (strain ATCC 49882 / DSM 28221 / CCUG 30454 / Houston 1) (Rochalimaea henselae)).